Consider the following 446-residue polypeptide: Enolase 1 (446 aa).

H164 and E173 together coordinate substrate. E216 functions as the Proton donor in the catalytic mechanism. 3 residues coordinate Mg(2+): D251, E302, and D329. Substrate contacts are provided by E302 and D329. K354 (proton acceptor) is an active-site residue. Substrate is bound by residues 381–384 (SHRS) and K405.

This sequence belongs to the enolase family. As to quaternary structure, homodimer. It depends on Mg(2+) as a cofactor.

The protein localises to the cytoplasm. It catalyses the reaction (2R)-2-phosphoglycerate = phosphoenolpyruvate + H2O. It functions in the pathway carbohydrate degradation; glycolysis; pyruvate from D-glyceraldehyde 3-phosphate: step 4/5. This Zea mays (Maize) protein is Enolase 1 (ENO1).